We begin with the raw amino-acid sequence, 172 residues long: uncharacterized protein (172 aa).

The N-terminal stretch at Met-1–Ala-29 is a signal peptide. SH3b domains lie at Ser-42–Ala-105 and Lys-112–Arg-172.

This is an uncharacterized protein from Bacillus subtilis (strain 168).